A 301-amino-acid chain; its full sequence is G-protein coupled receptor homolog U51 (301 aa).

The Extracellular segment spans residues 1–15 (MEKETKSLAWPATAE). Residues 16–36 (FYGWVFIFSSIQLCTVVFLTV) traverse the membrane as a helical segment. Over 37-48 (RFNGFKVGREYA) the chain is Cytoplasmic. Residues 49 to 69 (VFTFAGMSFNCFLLPIKMGLL) form a helical membrane-spanning segment. The Extracellular portion of the chain corresponds to 70-82 (SGHWTLPRDFCAI). The helical transmembrane segment at 83-103 (LLYIDDFSAYFSSWSLVFMAI) threads the bilayer. The Cytoplasmic segment spans residues 104 to 122 (ERINYFCYSTPLLNENSKA). A helical membrane pass occupies residues 123-143 (LAKVCFPIVWVVSGVQALQML). At 144-168 (NNYKATALQNETGQCFLAFLRSGHD) the chain is on the extracellular side. Asparagine 153 is a glycosylation site (N-linked (GlcNAc...) asparagine; by host). The chain crosses the membrane as a helical span at residues 169–189 (MWLMLVYSVVIPVMLVFFYLY). Residues 190–199 (SKNFMLLKDE) are Cytoplasmic-facing. The helical transmembrane segment at 200-220 (LSSVTTYLCIYLLLGTIAHLP) threads the bilayer. The Extracellular segment spans residues 221-238 (KAALSEIESDKIFYGLRD). Residues 239–259 (IFMALPVLKVYYISAMAYCMA) form a helical membrane-spanning segment. The Cytoplasmic portion of the chain corresponds to 260 to 301 (CDDHTVPVRLCSIWLVNLCKKCFSCTRREKGSDLEVGIKMLK).

Belongs to the G-protein coupled receptor 1 family.

The protein resides in the host cell membrane. The polypeptide is G-protein coupled receptor homolog U51 (U51) (Homo sapiens (Human)).